A 289-amino-acid chain; its full sequence is Putative 2-aminoethylphosphonate transport system permease protein PhnU (289 aa).

6 consecutive transmembrane segments (helical) span residues 19 to 39, 76 to 96, 111 to 131, 150 to 170, 202 to 222, and 254 to 274; these read WLLLPLLVLATLFFWPLSLIV, FFATAGCLLLGSVMSLILVFI, FIALPTFLITLAFTFIYGSAG, FLYSMQGVILAEITVFTPLVM, VIFPAALPALMAGGSLCLLLT, and YTVACMIALINIVLSLGLFSL. In terms of domain architecture, ABC transmembrane type-1 spans 68 to 275; the sequence is LLNTLQIAFF…VLSLGLFSLY (208 aa).

It belongs to the binding-protein-dependent transport system permease family.

It localises to the cell inner membrane. In terms of biological role, probably part of the PhnSTUV complex (TC 3.A.1.11.5) involved in 2-aminoethylphosphonate import. Probably responsible for the translocation of the substrate across the membrane. This chain is Putative 2-aminoethylphosphonate transport system permease protein PhnU (phnU), found in Salmonella paratyphi A (strain ATCC 9150 / SARB42).